Reading from the N-terminus, the 513-residue chain is ATP synthase subunit alpha (513 aa).

169–176 contributes to the ATP binding site; the sequence is GDRQTGKT.

Belongs to the ATPase alpha/beta chains family. As to quaternary structure, F-type ATPases have 2 components, CF(1) - the catalytic core - and CF(0) - the membrane proton channel. CF(1) has five subunits: alpha(3), beta(3), gamma(1), delta(1), epsilon(1). CF(0) has three main subunits: a(1), b(2) and c(9-12). The alpha and beta chains form an alternating ring which encloses part of the gamma chain. CF(1) is attached to CF(0) by a central stalk formed by the gamma and epsilon chains, while a peripheral stalk is formed by the delta and b chains.

The protein resides in the cell inner membrane. The catalysed reaction is ATP + H2O + 4 H(+)(in) = ADP + phosphate + 5 H(+)(out). Its function is as follows. Produces ATP from ADP in the presence of a proton gradient across the membrane. The alpha chain is a regulatory subunit. The protein is ATP synthase subunit alpha of Shewanella denitrificans (strain OS217 / ATCC BAA-1090 / DSM 15013).